We begin with the raw amino-acid sequence, 120 residues long: Ribonuclease P protein component (120 aa).

This sequence belongs to the RnpA family. In terms of assembly, consists of a catalytic RNA component (M1 or rnpB) and a protein subunit.

It carries out the reaction Endonucleolytic cleavage of RNA, removing 5'-extranucleotides from tRNA precursor.. Functionally, RNaseP catalyzes the removal of the 5'-leader sequence from pre-tRNA to produce the mature 5'-terminus. It can also cleave other RNA substrates such as 4.5S RNA. The protein component plays an auxiliary but essential role in vivo by binding to the 5'-leader sequence and broadening the substrate specificity of the ribozyme. The polypeptide is Ribonuclease P protein component (Mycobacterium marinum (strain ATCC BAA-535 / M)).